A 131-amino-acid polypeptide reads, in one-letter code: Small ribosomal subunit protein uS11 (131 aa).

Belongs to the universal ribosomal protein uS11 family. As to quaternary structure, part of the 30S ribosomal subunit. Interacts with proteins S7 and S18. Binds to IF-3.

Functionally, located on the platform of the 30S subunit, it bridges several disparate RNA helices of the 16S rRNA. Forms part of the Shine-Dalgarno cleft in the 70S ribosome. In Bacillus pumilus (strain SAFR-032), this protein is Small ribosomal subunit protein uS11.